A 744-amino-acid chain; its full sequence is Dual specificity protein kinase shkD (744 aa).

A disordered region spans residues 1–276; it reads MKRFFSNLFK…SGPPEILPEE (276 aa). Low complexity-rich tracts occupy residues 25-70, 79-107, and 127-200; these read PTTS…NSNQ, SPST…SFTP, and TSTT…QTAS. A compositionally biased stretch (polar residues) spans 201 to 210; it reads VNHTSSDQSL. Residues 211 to 236 show a composition bias toward low complexity; the sequence is NAQNVTQTNNNNNNNNNNNNNNNANN. A Protein kinase domain is found at 277–534; that stretch reads IDRTDFLGQG…EILFRLNEIL (258 aa). ATP contacts are provided by residues 283–291 and Lys304; that span reads LGQGSFGSV. The Proton acceptor role is filled by Asp400. The SH2 domain occupies 641-734; that stretch reads WFHGDIVREQ…LVPCPKFTQE (94 aa).

The protein belongs to the protein kinase superfamily. Ser/Thr protein kinase family. SH2 domain-containing protein kinase subfamily.

It is found in the membrane. The catalysed reaction is L-seryl-[protein] + ATP = O-phospho-L-seryl-[protein] + ADP + H(+). It carries out the reaction L-threonyl-[protein] + ATP = O-phospho-L-threonyl-[protein] + ADP + H(+). Functionally, required for proper chemotaxis and phagocytosis; proper spatiotemporal control of F-actin levels in chemotaxing cells. Negative regulator of the PI3K (phosphatidylinositol 3 kinase) pathway. Predominantly phosphorylates serines and threonines and tyrosines at a lower level. This chain is Dual specificity protein kinase shkD (shkD), found in Dictyostelium discoideum (Social amoeba).